A 341-amino-acid chain; its full sequence is CRISPR-associated endonuclease Cas1 (341 aa).

3 residues coordinate Mn(2+): Glu-173, His-242, and Glu-257.

Belongs to the CRISPR-associated endonuclease Cas1 family. Homodimer, forms a heterotetramer with a Cas2 homodimer. Mg(2+) is required as a cofactor. It depends on Mn(2+) as a cofactor.

In terms of biological role, CRISPR (clustered regularly interspaced short palindromic repeat), is an adaptive immune system that provides protection against mobile genetic elements (viruses, transposable elements and conjugative plasmids). CRISPR clusters contain spacers, sequences complementary to antecedent mobile elements, and target invading nucleic acids. CRISPR clusters are transcribed and processed into CRISPR RNA (crRNA). Acts as a dsDNA endonuclease. Involved in the integration of spacer DNA into the CRISPR cassette. This is CRISPR-associated endonuclease Cas1 from Korarchaeum cryptofilum (strain OPF8).